The primary structure comprises 134 residues: Profilin-1 (134 aa).

An intrachain disulfide couples Cys-13 to Cys-118. The short motif at 84–100 is the Involved in PIP2 interaction element; it reads AVIRGKKGSGGITTKKT. Thr-114 is modified (phosphothreonine).

The protein belongs to the profilin family. As to quaternary structure, occurs in many kinds of cells as a complex with monomeric actin in a 1:1 ratio. Post-translationally, phosphorylated by MAP kinases.

The protein resides in the cytoplasm. It localises to the cytoskeleton. Binds to actin and affects the structure of the cytoskeleton. At high concentrations, profilin prevents the polymerization of actin, whereas it enhances it at low concentrations. This chain is Profilin-1, found in Olea europaea (Common olive).